A 239-amino-acid chain; its full sequence is Probable transcriptional regulatory protein Aave_3203 (239 aa).

Residues 1-20 (MAGHSKWANIQHRKGRQDEK) form a disordered region.

It belongs to the TACO1 family.

It is found in the cytoplasm. The chain is Probable transcriptional regulatory protein Aave_3203 from Paracidovorax citrulli (strain AAC00-1) (Acidovorax citrulli).